The following is a 384-amino-acid chain: 8-amino-7-oxononanoate synthase (384 aa).

Arginine 21 lines the substrate pocket. A pyridoxal 5'-phosphate-binding site is contributed by 108–109 (GF). Histidine 133 contributes to the substrate binding site. Residues serine 179, histidine 207, and threonine 233 each coordinate pyridoxal 5'-phosphate. N6-(pyridoxal phosphate)lysine is present on lysine 236. Threonine 352 is a substrate binding site.

This sequence belongs to the class-II pyridoxal-phosphate-dependent aminotransferase family. BioF subfamily. In terms of assembly, homodimer. The cofactor is pyridoxal 5'-phosphate.

The enzyme catalyses 6-carboxyhexanoyl-[ACP] + L-alanine + H(+) = (8S)-8-amino-7-oxononanoate + holo-[ACP] + CO2. Its pathway is cofactor biosynthesis; biotin biosynthesis. In terms of biological role, catalyzes the decarboxylative condensation of pimeloyl-[acyl-carrier protein] and L-alanine to produce 8-amino-7-oxononanoate (AON), [acyl-carrier protein], and carbon dioxide. The protein is 8-amino-7-oxononanoate synthase of Escherichia coli (strain K12 / DH10B).